Consider the following 444-residue polypeptide: F-box/FBD/LRR-repeat protein At5g53840 (444 aa).

One can recognise an F-box domain in the interval 17 to 63 (EERLSQLPDHLICVILSHLSTKDAVRTSILSTRWRNLWQLVPVLDFD). LRR repeat units lie at residues 103–123 (YYLTSWIDLVTRHRIQHIDIS), 124–150 (VFTCSGFGVIPLSLYTCDTLVHLKLSR), 151–171 (VTMVNVEFVSLPCLKILDLDF), 172–197 (VNFTNETTLDKIISCSPVLEELTIVK), 199–224 (SEDNVKIIQVRSQTLKRVEIHRRFDR), 226–252 (NGLVIDTPLLQFLSIKAHSIKSIEFIN), 273–299 (NRSMTRDFFTTISRVRSLVIRHGTIKD), 300–321 (IFHYMELEPLQQFCYLSELSAV), 322–347 (CSISNLEMLLNLLKSCPKLESLSLKL), 369–396 (VSSLKFVKLESQLLGCGTELKVARYFLE), and 398–423 (STILEKLTLKIDYMYKDEANVNHIRQ). Positions 356-408 (EEVMSSTVPPPCLVSSLKFVKLESQLLGCGTELKVARYFLENSTILEKLTLKI) constitute an FBD domain.

The sequence is that of F-box/FBD/LRR-repeat protein At5g53840 from Arabidopsis thaliana (Mouse-ear cress).